A 111-amino-acid polypeptide reads, in one-letter code: Ig kappa chain V-III region CBPC 101 (111 aa).

The tract at residues Asp1–Cys23 is framework-1. Cys23 and Cys92 are oxidised to a cystine. Positions Lys24–Asn38 are complementarity-determining-1. Residues Trp39–Tyr53 are framework-2. Positions Ala54–Ser60 are complementarity-determining-2. Positions Gly61–Cys92 are framework-3. The complementarity-determining-3 stretch occupies residues Gln93–Thr101. The tract at residues Phe102–Lys111 is framework-4.

The protein is Ig kappa chain V-III region CBPC 101 of Mus musculus (Mouse).